A 363-amino-acid polypeptide reads, in one-letter code: Phospho-N-acetylmuramoyl-pentapeptide-transferase (363 aa).

A run of 9 helical transmembrane segments spans residues 13 to 33 (ISGI…AFFL), 49 to 69 (LPLL…IPLL), 95 to 115 (MGGI…SNFA), 119 to 139 (LAVS…DWQI), 154 to 174 (LALQ…NQPS), 183 to 203 (WVSF…FVLV), 224 to 244 (AIAL…LMVF), 281 to 301 (AVAL…IFFV), and 343 to 363 (ELQV…ICLA).

The protein belongs to the glycosyltransferase 4 family. MraY subfamily. Mg(2+) serves as cofactor.

It localises to the cell inner membrane. The catalysed reaction is UDP-N-acetyl-alpha-D-muramoyl-L-alanyl-gamma-D-glutamyl-meso-2,6-diaminopimeloyl-D-alanyl-D-alanine + di-trans,octa-cis-undecaprenyl phosphate = di-trans,octa-cis-undecaprenyl diphospho-N-acetyl-alpha-D-muramoyl-L-alanyl-D-glutamyl-meso-2,6-diaminopimeloyl-D-alanyl-D-alanine + UMP. It functions in the pathway cell wall biogenesis; peptidoglycan biosynthesis. Catalyzes the initial step of the lipid cycle reactions in the biosynthesis of the cell wall peptidoglycan: transfers peptidoglycan precursor phospho-MurNAc-pentapeptide from UDP-MurNAc-pentapeptide onto the lipid carrier undecaprenyl phosphate, yielding undecaprenyl-pyrophosphoryl-MurNAc-pentapeptide, known as lipid I. The polypeptide is Phospho-N-acetylmuramoyl-pentapeptide-transferase (Nostoc punctiforme (strain ATCC 29133 / PCC 73102)).